A 360-amino-acid chain; its full sequence is MLVWVADFLAQYFSIFSVFQYLTLRAILGVLTALLISLLVGPVMIRKLSYYQIGQAVRDDGPESHFSKAGTPTMGGALILVAIAVSTLLWADLTNRYVLITLGVTLLFGAIGWVDDWRKVVERNPKGLPARWKYFWQSVFGFGAAVLLFKTAHLPQETTLIVPFFKDITLALGVGFVLLTYFVIVGGSNAVNLTDGLDGLAIMPTVMVGGALAVFAYLSGHVKFAEYLHIPYLPGTGELVIFLGALVGAGLGFLWFNTYPAQVFMGDVGALALGAALGVVAVIVRQELVFFVMGGVFVMETVSVILQVASYKLTGRRIFRMAPLHHHFELKGWPEPRVIVRFWVITVVLVLVGLATLKIR.

Transmembrane regions (helical) follow at residues 2–22 (LVWVADFLAQYFSIFSVFQYL), 26–46 (AILGVLTALLISLLVGPVMIR), 73–93 (TMGGALILVAIAVSTLLWADL), 97–117 (YVLITLGVTLLFGAIGWVDDW), 134–154 (YFWQSVFGFGAAVLLFKTAHL), 168–188 (ITLALGVGFVLLTYFVIVGGS), 199–219 (GLAIMPTVMVGGALAVFAYLS), 236–256 (TGELVIFLGALVGAGLGFLWF), 263–283 (VFMGDVGALALGAALGVVAVI), 288–308 (LVFFVMGGVFVMETVSVILQV), and 339–359 (IVRFWVITVVLVLVGLATLKI).

This sequence belongs to the glycosyltransferase 4 family. MraY subfamily. It depends on Mg(2+) as a cofactor.

Its subcellular location is the cell inner membrane. The enzyme catalyses UDP-N-acetyl-alpha-D-muramoyl-L-alanyl-gamma-D-glutamyl-meso-2,6-diaminopimeloyl-D-alanyl-D-alanine + di-trans,octa-cis-undecaprenyl phosphate = di-trans,octa-cis-undecaprenyl diphospho-N-acetyl-alpha-D-muramoyl-L-alanyl-D-glutamyl-meso-2,6-diaminopimeloyl-D-alanyl-D-alanine + UMP. Its pathway is cell wall biogenesis; peptidoglycan biosynthesis. Functionally, catalyzes the initial step of the lipid cycle reactions in the biosynthesis of the cell wall peptidoglycan: transfers peptidoglycan precursor phospho-MurNAc-pentapeptide from UDP-MurNAc-pentapeptide onto the lipid carrier undecaprenyl phosphate, yielding undecaprenyl-pyrophosphoryl-MurNAc-pentapeptide, known as lipid I. This Hahella chejuensis (strain KCTC 2396) protein is Phospho-N-acetylmuramoyl-pentapeptide-transferase.